The chain runs to 350 residues: MNAMNPQHENAQTVTSMTMIQALRSAMDIMLERDDDVVVFGQDVGYFGGVFRCTEGLQKKYGTSRVFDAPISESGIIGAAVGMGAYGLRPVVEIQFADYVYPASDQLISEAARLRYRSAGDFIVPMTVRMPCGGGIYGGQTHSQSPEAMFTQVCGLRTVMPSNPYDAKGLLIACIENDDPVIFLEPKRLYNGPFDGHHDRPVTPWSKHPASQVPDGYYKVPLDKAAIVRPGAALTVLTYGTMVYVAQAAADETGLDAEIIDLRSLWPLDLETIVASVKKTGRCVIAHEATRTCGFGAELMSLVQEHCFHHLEAPIERVTGWDTPYPHAQEWAYFPGPARVGAAFKRVMEV.

As to quaternary structure, heterodimer of an alpha and a beta chain. Thiamine diphosphate serves as cofactor.

It catalyses the reaction N(6)-[(R)-lipoyl]-L-lysyl-[protein] + 3-methyl-2-oxobutanoate + H(+) = N(6)-[(R)-S(8)-2-methylpropanoyldihydrolipoyl]-L-lysyl-[protein] + CO2. The branched-chain alpha-keto dehydrogenase complex catalyzes the overall conversion of alpha-keto acids to acyl-CoA and CO(2). It contains multiple copies of three enzymatic components: branched-chain alpha-keto acid decarboxylase (E1), lipoamide acyltransferase (E2) and lipoamide dehydrogenase (E3). This is 2-oxoisovalerate dehydrogenase subunit beta (bkdA2) from Pseudomonas aeruginosa (strain ATCC 15692 / DSM 22644 / CIP 104116 / JCM 14847 / LMG 12228 / 1C / PRS 101 / PAO1).